The sequence spans 347 residues: S-adenosylmethionine:tRNA ribosyltransferase-isomerase (347 aa).

This sequence belongs to the QueA family. As to quaternary structure, monomer.

Its subcellular location is the cytoplasm. It carries out the reaction 7-aminomethyl-7-carbaguanosine(34) in tRNA + S-adenosyl-L-methionine = epoxyqueuosine(34) in tRNA + adenine + L-methionine + 2 H(+). It functions in the pathway tRNA modification; tRNA-queuosine biosynthesis. Its function is as follows. Transfers and isomerizes the ribose moiety from AdoMet to the 7-aminomethyl group of 7-deazaguanine (preQ1-tRNA) to give epoxyqueuosine (oQ-tRNA). In Treponema denticola (strain ATCC 35405 / DSM 14222 / CIP 103919 / JCM 8153 / KCTC 15104), this protein is S-adenosylmethionine:tRNA ribosyltransferase-isomerase.